A 688-amino-acid chain; its full sequence is Polyribonucleotide nucleotidyltransferase (688 aa).

Mg(2+)-binding residues include Asp484 and Asp490. Residues 550–609 (PQTEIFNVAPDKIIEIIGQGGRVIKEIVEKFEVKIDLNTPSGEVKIMGNKERVLKTKEFI) enclose the KH domain. The 63-residue stretch at 626–688 (DEVLEAQVKR…NKGKIALDLA (63 aa)) folds into the S1 motif domain.

It belongs to the polyribonucleotide nucleotidyltransferase family. Mg(2+) is required as a cofactor.

The protein resides in the cytoplasm. It catalyses the reaction RNA(n+1) + phosphate = RNA(n) + a ribonucleoside 5'-diphosphate. In terms of biological role, involved in mRNA degradation. Catalyzes the phosphorolysis of single-stranded polyribonucleotides processively in the 3'- to 5'-direction. This Helicobacter pylori (strain J99 / ATCC 700824) (Campylobacter pylori J99) protein is Polyribonucleotide nucleotidyltransferase.